Consider the following 212-residue polypeptide: Thiamine-phosphate synthase (212 aa).

Residues 35-39 and asparagine 67 contribute to the 4-amino-2-methyl-5-(diphosphooxymethyl)pyrimidine site; that span reads QLRDK. Aspartate 68 and aspartate 87 together coordinate Mg(2+). 4-amino-2-methyl-5-(diphosphooxymethyl)pyrimidine is bound at residue serine 106. 132–134 is a binding site for 2-[(2R,5Z)-2-carboxy-4-methylthiazol-5(2H)-ylidene]ethyl phosphate; sequence TGS. Lysine 135 contacts 4-amino-2-methyl-5-(diphosphooxymethyl)pyrimidine. Residues glycine 163 and 183-184 contribute to the 2-[(2R,5Z)-2-carboxy-4-methylthiazol-5(2H)-ylidene]ethyl phosphate site; that span reads IS.

It belongs to the thiamine-phosphate synthase family. The cofactor is Mg(2+).

The catalysed reaction is 2-[(2R,5Z)-2-carboxy-4-methylthiazol-5(2H)-ylidene]ethyl phosphate + 4-amino-2-methyl-5-(diphosphooxymethyl)pyrimidine + 2 H(+) = thiamine phosphate + CO2 + diphosphate. It carries out the reaction 2-(2-carboxy-4-methylthiazol-5-yl)ethyl phosphate + 4-amino-2-methyl-5-(diphosphooxymethyl)pyrimidine + 2 H(+) = thiamine phosphate + CO2 + diphosphate. The enzyme catalyses 4-methyl-5-(2-phosphooxyethyl)-thiazole + 4-amino-2-methyl-5-(diphosphooxymethyl)pyrimidine + H(+) = thiamine phosphate + diphosphate. It participates in cofactor biosynthesis; thiamine diphosphate biosynthesis; thiamine phosphate from 4-amino-2-methyl-5-diphosphomethylpyrimidine and 4-methyl-5-(2-phosphoethyl)-thiazole: step 1/1. Its function is as follows. Condenses 4-methyl-5-(beta-hydroxyethyl)thiazole monophosphate (THZ-P) and 2-methyl-4-amino-5-hydroxymethyl pyrimidine pyrophosphate (HMP-PP) to form thiamine monophosphate (TMP). The polypeptide is Thiamine-phosphate synthase (Methanocella arvoryzae (strain DSM 22066 / NBRC 105507 / MRE50)).